A 420-amino-acid chain; its full sequence is Transcriptional adapter 2-beta (420 aa).

The ZZ-type zinc-finger motif lies at 4-59 (LSKKYCVYCLADVTSLRLRCTECQDIELCTDCFSAGAEIGNHRRWHGYQLVDGGRF). Residues Cys-9, Cys-12, Cys-23, Cys-26, Cys-32, Cys-35, His-45, and His-49 each coordinate Zn(2+). One can recognise an SANT domain in the interval 65 to 118 (EAEGGWTSREEQLLLDAIEQFGFGNWEDMAAHVGASRTPTEVMEHYVTMYIHGN). The tract at residues 303–333 (EESAEYEAARHKREKRKENKNIANSKRGRED) is disordered.

The protein localises to the nucleus. In terms of biological role, transcriptional coactivator. This Xenopus laevis (African clawed frog) protein is Transcriptional adapter 2-beta (tada2b).